Here is a 451-residue protein sequence, read N- to C-terminus: E3 ubiquitin-protein ligase trul-1 (451 aa).

The segment at 13–54 (CSICFEDLKQNDKISAIVCGHIYHHGCISQWIATKRQCPSCR) adopts an RING-type; atypical zinc-finger fold. Coiled-coil stretches lie at residues 96–130 (LKVE…EKDK) and 209–243 (NKDL…DAAI). Disordered regions lie at residues 270 to 297 (RDVL…MIDP) and 389 to 442 (KIPN…SSTS). The span at 427–442 (STRISSFFSRTTSSTS) shows a compositional bias: low complexity.

The protein belongs to the TRAIP family.

The protein localises to the nucleus. It is found in the chromosome. It carries out the reaction S-ubiquitinyl-[E2 ubiquitin-conjugating enzyme]-L-cysteine + [acceptor protein]-L-lysine = [E2 ubiquitin-conjugating enzyme]-L-cysteine + N(6)-ubiquitinyl-[acceptor protein]-L-lysine.. The protein operates within protein modification; protein ubiquitination. Functionally, E3 ubiquitin ligase that acts as a key regulator of DNA repair in response to replication stress. Acts by mediating ubiquitination of the CMG helicase complex, promoting the unloading of the CMG helicase complex by the p97 ATPase (cdc-48.1 or cdc-48.2). This chain is E3 ubiquitin-protein ligase trul-1, found in Caenorhabditis elegans.